The sequence spans 172 residues: RNA silencing suppressor p19 (172 aa).

Residues 1–15 show a composition bias toward basic and acidic residues; that stretch reads MERAIQGNDAREQAY. Positions 1-38 are disordered; sequence MERAIQGNDAREQAYGERWNGGPGGSTSPFQLPDESPS.

It belongs to the tombusvirus protein p19 family. Homodimer.

In terms of biological role, viral suppressor of RNA silencing which binds specifically to silencing RNAs (siRNAs). Acts as a molecular caliper to specifically select siRNAs based on the length of the duplex region of the RNA. The protein is RNA silencing suppressor p19 of Tomato bushy stunt virus (strain A23) (TBSV).